The sequence spans 456 residues: Chromosomal replication initiator protein DnaA (456 aa).

The tract at residues 1–83 is domain I, interacts with DnaA modulators; that stretch reads MKLKILHFTS…DAFEEESNNG (83 aa). The domain II stretch occupies residues 83 to 116; the sequence is GVRPEIHIKVKEKKENVKSLKNNKSMLYFNTNGL. A domain III, AAA+ region region spans residues 117–331; sequence SLNPFYTFEN…GILSTINAHI (215 aa). Residues Gly161, Gly163, Lys164, and Thr165 each coordinate ATP. The segment at 332–456 is domain IV, binds dsDNA; the sequence is NLSPESSSLK…SKIQQSLDSV (125 aa).

The protein belongs to the DnaA family. Oligomerizes as a right-handed, spiral filament on DNA at oriC.

It localises to the cytoplasm. Plays an essential role in the initiation and regulation of chromosomal replication. ATP-DnaA binds to the origin of replication (oriC) to initiate formation of the DNA replication initiation complex once per cell cycle. Binds the DnaA box (a 9 base pair repeat at the origin) and separates the double-stranded (ds)DNA. Forms a right-handed helical filament on oriC DNA; dsDNA binds to the exterior of the filament while single-stranded (ss)DNA is stabiized in the filament's interior. The ATP-DnaA-oriC complex binds and stabilizes one strand of the AT-rich DNA unwinding element (DUE), permitting loading of DNA polymerase. After initiation quickly degrades to an ADP-DnaA complex that is not apt for DNA replication. Binds acidic phospholipids. The protein is Chromosomal replication initiator protein DnaA of Helicobacter hepaticus (strain ATCC 51449 / 3B1).